We begin with the raw amino-acid sequence, 165 residues long: Pro-MCH (165 aa).

Residues 1 to 21 (MAKMSLSSYMLMLAFSLFSHG) form the signal peptide. Basic and acidic residues predominate over residues 69–82 (DESGFMKDDDDKTT). The segment at 69-89 (DESGFMKDDDDKTTKNTGSKQ) is disordered. Ile-143 bears the Isoleucine amide mark. Cys-153 and Cys-162 are joined by a disulfide.

This sequence belongs to the melanin-concentrating hormone family. Pro-MCH is processed differentially in the brain and in peripheral organs producing two neuropeptides; NEI and MCH. A third peptide, NGE, may also be produced. Preferential processing in neurons by prohormone convertase 2 (PC2) generates NEI. MCH is generated in neurons of the lateral hypothalmic area by several prohormone convertases including PC1/3, PC2 and PC5/6. MCH is present in all regions of the brain and in neurointermediate lobe of the pituarity gland, with highest concentrations in the hypothalamus. Also expressed to a much lesser extent in stomach, lamina propria of both duodenum and colon, ovary, thymus, pancreas, adrenal gland and testis (spermatogonia, early spermatocytes and Sertoli cells). Weak expression in heart and lung. The other peptides are expressed at least in Sertoli cells, nei being also expressed in brain, stomach and proximal duodenum. In brain exclusively mature mch and nei peptides are present. In peripheral tissues a large product, encompassing the NEI and MCH domains of the precursor, is found predominantly. At low levels fully processed MCH and NEI peptides are present in gut. No expression in peripheral blood.

The protein resides in the secreted. Functionally, MCH inhibits ACTH secretion at the end of the light on period which corresponds to the peak of the circadian rhythm in ACTH. Inhibits also stress induced ACTH release during the light off period of the cycle. Involved as a neurotransmitter or neuromodulator in a broad array of neuronal functions. Stimulates sexual behavior when injected into the ventromedial nucleus, this effect is antagonized by NEI. In the medial preoptic area, stimulates anxiety and sexual behavior. Antagonizes inhibitory effect of melanotropin alpha on exploration behavior. In terms of biological role, NEI can influence differentiation of neuronal processes in brain neurons. Affects the content of neurofilament protein in neuritogenesis (in vitro). May also be a neuromodulatory factor. In behavioral tests, it stimulates exploration and anxiety when injected into the ventromedial nucleus. Also stimulates grooming, locomotion and rearing. May antagonize the inhibitory effect of mch on ACTH release. Reduces dopamine and dopac release in the ventromedial nucleus. The polypeptide is Pro-MCH (Pmch) (Rattus norvegicus (Rat)).